The following is a 416-amino-acid chain: Floricaula/leafy homolog 2 (416 aa).

Residues 154-237 (EGLSEEPVQQ…DASGGISERQ (84 aa)) form a disordered region. The segment covering 210–225 (AEEDEETEEGQEDDWN) has biased composition (acidic residues). DNA-binding regions lie at residues 238–242 (REHPF), 307–314 (NKPKMRHY), and 378–381 (YVPT).

This sequence belongs to the FLO/LFY family. As to expression, expressed in floral meristems and in indeterminate vegetative meristems.

It localises to the nucleus. Probable transcription factor that act to specify determinacy in the progenitor cells for both flowers and leaves. The protein is Floricaula/leafy homolog 2 (FL2) of Nicotiana tabacum (Common tobacco).